The following is a 159-amino-acid chain: Protein-export protein SecB (159 aa).

This sequence belongs to the SecB family. As to quaternary structure, homotetramer, a dimer of dimers. One homotetramer interacts with 1 SecA dimer.

It localises to the cytoplasm. Its function is as follows. One of the proteins required for the normal export of preproteins out of the cell cytoplasm. It is a molecular chaperone that binds to a subset of precursor proteins, maintaining them in a translocation-competent state. It also specifically binds to its receptor SecA. The polypeptide is Protein-export protein SecB (Aromatoleum aromaticum (strain DSM 19018 / LMG 30748 / EbN1) (Azoarcus sp. (strain EbN1))).